A 68-amino-acid chain; its full sequence is MMKKGIHPEYIPCKVTCVTSGKQLEVLSTKSELRIDISSFCHPFYTGSDKITDITGRVEKFRQKYNMK.

The protein belongs to the bacterial ribosomal protein bL31 family. Type A subfamily. As to quaternary structure, part of the 50S ribosomal subunit.

Binds the 23S rRNA. In Helicobacter hepaticus (strain ATCC 51449 / 3B1), this protein is Large ribosomal subunit protein bL31.